A 308-amino-acid chain; its full sequence is MSPMAERLRSIIRDPGRIRRAEPLKRHTSVRIGGPADYLVEVADRHELSRLLRLAGEEALPVYILGSGSNLVVSDEGVRGLVLRLTGEFARIAVDGSTVRVGGGCSLPKLAHQASRRGLGGLEFACAIPGTVGAGLVMNAGAHGGDMAQVVAEATVIWGDGRMERLCPGEIGFAYRSTRLQGTSAIVAEVVMALRPADRAALEGAMRQHLNRRRATQPLQYPNAGSVFKNPPGDYAGRLIEQAGLKGERVGDAQVSEKHANFIVNLGQATARDVLTLMDRVRSTVERRFGVRLEAEVKIWGHNPWFPP.

The 167-residue stretch at 31-197 (RIGGPADYLV…AEVVMALRPA (167 aa)) folds into the FAD-binding PCMH-type domain. Residue Arg-176 is part of the active site. The active-site Proton donor is Ser-226. Glu-296 is a catalytic residue.

The protein belongs to the MurB family. FAD serves as cofactor.

Its subcellular location is the cytoplasm. It catalyses the reaction UDP-N-acetyl-alpha-D-muramate + NADP(+) = UDP-N-acetyl-3-O-(1-carboxyvinyl)-alpha-D-glucosamine + NADPH + H(+). The protein operates within cell wall biogenesis; peptidoglycan biosynthesis. Its function is as follows. Cell wall formation. The polypeptide is UDP-N-acetylenolpyruvoylglucosamine reductase 2 (Symbiobacterium thermophilum (strain DSM 24528 / JCM 14929 / IAM 14863 / T)).